Reading from the N-terminus, the 444-residue chain is UDP-N-acetylmuramate--L-alanine ligase (444 aa).

Residue glycine 110–serine 116 coordinates ATP.

The protein belongs to the MurCDEF family.

It localises to the cytoplasm. It catalyses the reaction UDP-N-acetyl-alpha-D-muramate + L-alanine + ATP = UDP-N-acetyl-alpha-D-muramoyl-L-alanine + ADP + phosphate + H(+). It functions in the pathway cell wall biogenesis; peptidoglycan biosynthesis. Its function is as follows. Cell wall formation. This is UDP-N-acetylmuramate--L-alanine ligase from Streptococcus pneumoniae (strain Hungary19A-6).